The primary structure comprises 169 residues: Actin-related protein 2/3 complex subunit 4 (169 aa).

The protein belongs to the ARPC4 family. In terms of assembly, component of the Arp2/3 complex composed of arpB/Arp2, arpC/Arp3, arcA/p41-arc, arcB/p34-arc, arcC/p21-arc, arcD/p20-arc and arcE/p16-arc. Interacts with carmil (via the region between the LRR domain and COOH-terminal proline-rich domain); carmil is required for Arp2/3-dependent actin nucleation. Arp2/3 complex, MyoB, MyoC, and the alpha and beta subunits of capping protein all form a larger complex with carmil.

The protein resides in the cytoplasm. The protein localises to the cytoskeleton. It is found in the cytosol. Its subcellular location is the cell cortex. It localises to the cell projection. The protein resides in the pseudopodium. Functionally, functions as a component of the Arp2/3 complex which is involved in regulation of actin polymerization and together with an activating nucleation-promoting factor (NPF) mediates the formation of branched actin networks. Seems to contact the pointed end of the daughter actin filament. The Arp2/3 complex is involved in organizing the actin system in cell motility and chemotaxis, in phagocytosis and macropinocytosis, at late steps of endosome processing, and in mitosis. In concert with a group of other proteins, the Arp2/3 complex plays a general role in the rapid activation and adaptation of the actin system to its multiple functions. The sequence is that of Actin-related protein 2/3 complex subunit 4 (arcD) from Dictyostelium discoideum (Social amoeba).